The sequence spans 531 residues: Putative heme-binding protein HQ_1094A (531 aa).

Histidine 177 provides a ligand contact to heme. Residues 269–340 (AHGEAHGHAH…STNTNTQDSE (72 aa)) form a disordered region. A compositionally biased stretch (basic and acidic residues) spans 271–281 (GEAHGHAHGDS). A compositionally biased stretch (gly residues) spans 284-306 (GSGGGGGSSHGQSPGGASAGGSA). Basic and acidic residues predominate over residues 308 to 317 (GTEDADHSDS). A compositionally biased stretch (low complexity) spans 318-338 (RSTTSADTTQSDTSTNTNTQD). In terms of domain architecture, ABM spans 441 to 529 (GTMGMFYTVK…VLSERPRHVF (89 aa)).

This sequence in the N-terminal section; belongs to the ChdC family.

This chain is Putative heme-binding protein HQ_1094A, found in Haloquadratum walsbyi (strain DSM 16790 / HBSQ001).